The primary structure comprises 427 residues: Homoserine O-acetyltransferase FUB5 (427 aa).

Residues Met1 to Pro13 are compositionally biased toward low complexity. The interval Met1–Phe35 is disordered. Residues Asn77–Leu400 enclose the AB hydrolase-1 domain. Ser175 (nucleophile) is an active-site residue. Residues Arg260–Val297 are disordered. The span at Ser276–His287 shows a compositional bias: polar residues. Catalysis depends on residues Asp367 and His396.

It belongs to the AB hydrolase superfamily. MetX family.

It catalyses the reaction L-homoserine + acetyl-CoA = O-acetyl-L-homoserine + CoA. It functions in the pathway mycotoxin biosynthesis. In terms of biological role, homoserine O-acetyltransferase; part of the gene cluster that mediates the biosynthesis of fusaric acid, a mycotoxin with low to moderate toxicity to animals and humans, but with high phytotoxic properties. L-aspartate is suggested as fusaric acid amino acid precursor that is activated and further processed to O-acetyl-L-homoserine by cluster enzymes aspartate kinase FUB3 and homoserine O-acetyltransferase FUB5, as well as enzymes of the primary metabolism. The polyketide synthase (PKS) FUB1 generates the triketide trans-2-hexenal which is presumptively released by the hydrolase FUB4 and linked to the NRPS-bound amino acid precursor by NAD(P)-dependent dehydrogenase FUB6. FUB1, FUB4, and the non-canonical NRPS Fub8 may form an enzyme complex. Further processing of the NRPS-bound intermediate might be carried out by FUB6 and the sulfhydrylase FUB7, enabling a spontaneous electrocyclization to close the carbon backbone of fusaric acid. Dihydrofusaric acid is likely to be released via reduction by the thioester reductase (TR) domain of FUB8 whereupon the final oxidation to fusaric acid may (also) be performed by the FMN-dependent dehydrogenase FUB9. The chain is Homoserine O-acetyltransferase FUB5 from Gibberella fujikuroi (strain CBS 195.34 / IMI 58289 / NRRL A-6831) (Bakanae and foot rot disease fungus).